A 503-amino-acid polypeptide reads, in one-letter code: ATP synthase subunit alpha (503 aa).

Residue 170–177 (GDRQTGKT) coordinates ATP.

Belongs to the ATPase alpha/beta chains family. In terms of assembly, F-type ATPases have 2 components, CF(1) - the catalytic core - and CF(0) - the membrane proton channel. CF(1) has five subunits: alpha(3), beta(3), gamma(1), delta(1), epsilon(1). CF(0) has three main subunits: a(1), b(2) and c(9-12). The alpha and beta chains form an alternating ring which encloses part of the gamma chain. CF(1) is attached to CF(0) by a central stalk formed by the gamma and epsilon chains, while a peripheral stalk is formed by the delta and b chains.

The protein resides in the cell membrane. The enzyme catalyses ATP + H2O + 4 H(+)(in) = ADP + phosphate + 5 H(+)(out). Functionally, produces ATP from ADP in the presence of a proton gradient across the membrane. The alpha chain is a regulatory subunit. The protein is ATP synthase subunit alpha of Brevibacillus brevis (strain 47 / JCM 6285 / NBRC 100599).